Reading from the N-terminus, the 898-residue chain is Protein kintoun (898 aa).

Disordered stretches follow at residues 558–680 (GELK…VESD) and 765–822 (ILGQ…SGIS). Residues 575 to 602 (INTRTVEDDTKVAKENVKKVDQETAHEG) show a composition bias toward basic and acidic residues. The span at 603–616 (KKSKKNQRRKNKKR) shows a compositional bias: basic residues. Residues 641-656 (NEANSFEGTGSSSEAT) are compositionally biased toward polar residues.

It belongs to the PIH1 family. Kintoun subfamily.

The protein resides in the cytoplasm. Functionally, required for cytoplasmic pre-assembly of axonemal dyneins, thereby playing a central role in motility in cilia and flagella. Involved in pre-assembly of dynein arm complexes in the cytoplasm before intraflagellar transport loads them for the ciliary compartment. The protein is Protein kintoun of Aedes aegypti (Yellowfever mosquito).